Reading from the N-terminus, the 512-residue chain is Putative ankyrin repeat protein FPV233 (512 aa).

ANK repeat units lie at residues 45 to 73 (IPFIPLHQAIEARNIDIIKSIITVDNVNQ), 77 to 106 (DDTYPIHIICKEPNMLAISYMLRSINQCSV), 136 to 168 (IQDIDLKYIDKKSKDDIIEITKLLFSYGADINM), 172 to 201 (HGNSPLHYATENPDQRLTRLLLSKGANPNI), 205 to 236 (TNKSPLYYSIESDNPDITMLLIDKFIFNNTDP), 238 to 262 (LSHAIKHYRKPILHALIENGASINA), 266 to 296 (YGNTPLHYAVSYCKDIDVIKLLLERGVDVNA), and 301 to 329 (RNLTPLHSSYLKSPRVLKLLLQYGADINS).

The sequence is that of Putative ankyrin repeat protein FPV233 from Vertebrata (FPV).